A 280-amino-acid polypeptide reads, in one-letter code: 2,3,4,5-tetrahydropyridine-2,6-dicarboxylate N-succinyltransferase (280 aa).

Substrate contacts are provided by Arg107 and Asp144.

This sequence belongs to the transferase hexapeptide repeat family. As to quaternary structure, homotrimer.

It localises to the cytoplasm. The enzyme catalyses (S)-2,3,4,5-tetrahydrodipicolinate + succinyl-CoA + H2O = (S)-2-succinylamino-6-oxoheptanedioate + CoA. The protein operates within amino-acid biosynthesis; L-lysine biosynthesis via DAP pathway; LL-2,6-diaminopimelate from (S)-tetrahydrodipicolinate (succinylase route): step 1/3. This is 2,3,4,5-tetrahydropyridine-2,6-dicarboxylate N-succinyltransferase from Paramagnetospirillum magneticum (strain ATCC 700264 / AMB-1) (Magnetospirillum magneticum).